A 245-amino-acid polypeptide reads, in one-letter code: 1-(5-phosphoribosyl)-5-[(5-phosphoribosylamino)methylideneamino] imidazole-4-carboxamide isomerase (245 aa).

D8 functions as the Proton acceptor in the catalytic mechanism. D130 serves as the catalytic Proton donor.

The protein belongs to the HisA/HisF family.

The protein resides in the cytoplasm. It carries out the reaction 1-(5-phospho-beta-D-ribosyl)-5-[(5-phospho-beta-D-ribosylamino)methylideneamino]imidazole-4-carboxamide = 5-[(5-phospho-1-deoxy-D-ribulos-1-ylimino)methylamino]-1-(5-phospho-beta-D-ribosyl)imidazole-4-carboxamide. The protein operates within amino-acid biosynthesis; L-histidine biosynthesis; L-histidine from 5-phospho-alpha-D-ribose 1-diphosphate: step 4/9. In Azotobacter vinelandii (strain DJ / ATCC BAA-1303), this protein is 1-(5-phosphoribosyl)-5-[(5-phosphoribosylamino)methylideneamino] imidazole-4-carboxamide isomerase.